Reading from the N-terminus, the 156-residue chain is Large ribosomal subunit protein uL15 (156 aa).

The interval 1 to 48 (MKLHDLKPTPGSRKDRKRVGRGPGGTDKTAGRGHKGQKSRSGAGKGAF) is disordered.

This sequence belongs to the universal ribosomal protein uL15 family. Part of the 50S ribosomal subunit. Contacts proteins L4, L21 and L35.

In terms of biological role, binds to the 23S rRNA. The chain is Large ribosomal subunit protein uL15 (rplO) from Deinococcus radiodurans (strain ATCC 13939 / DSM 20539 / JCM 16871 / CCUG 27074 / LMG 4051 / NBRC 15346 / NCIMB 9279 / VKM B-1422 / R1).